Consider the following 334-residue polypeptide: Malate dehydrogenase, cytoplasmic (334 aa).

N-acetylserine is present on Ser2. NAD(+)-binding positions include 11–17 and Asp42; that span reads GAAGQIA. Substrate contacts are provided by Arg92 and Arg98. Position 105 (Asn105) interacts with NAD(+). Lys110 carries the post-translational modification N6-succinyllysine. Position 112 (Gln112) interacts with NAD(+). N6-acetyllysine is present on residues Lys118 and Lys121. Position 129–131 (129–131) interacts with NAD(+); it reads VGN. Substrate-binding residues include Asn131 and Arg162. The Proton acceptor role is filled by His187. Lys214 is subject to N6-succinyllysine. Ser217 carries the phosphoserine modification. Arg230 carries the omega-N-methylarginine modification. Ser241 is modified (phosphoserine). Lys298 is subject to N6-acetyllysine; alternate. Residue Lys298 is modified to N6-succinyllysine; alternate. Ser309 bears the Phosphoserine mark. Lys318 is subject to N6-succinyllysine. Ser332 and Ser333 each carry phosphoserine.

It belongs to the LDH/MDH superfamily. MDH type 2 family. Homodimer. In terms of processing, ISGylated. Acetylation at Lys-118 dramatically enhances enzymatic activity and promotes adipogenic differentiation.

It localises to the cytoplasm. The protein resides in the cytosol. The enzyme catalyses (S)-malate + NAD(+) = oxaloacetate + NADH + H(+). The catalysed reaction is (2R)-2-hydroxy-3-(4-hydroxyphenyl)propanoate + NAD(+) = 3-(4-hydroxyphenyl)pyruvate + NADH + H(+). It carries out the reaction (S)-2-hydroxyglutarate + NAD(+) = 2-oxoglutarate + NADH + H(+). In terms of biological role, catalyzes the reduction of aromatic alpha-keto acids in the presence of NADH. Plays essential roles in the malate-aspartate shuttle and the tricarboxylic acid cycle, important in mitochondrial NADH supply for oxidative phosphorylation. Catalyzes the reduction of 2-oxoglutarate to 2-hydroxyglutarate, leading to elevated reactive oxygen species (ROS). This Homo sapiens (Human) protein is Malate dehydrogenase, cytoplasmic.